The chain runs to 1216 residues: ATP-dependent DNA helicase Q4 (1216 aa).

2 disordered regions span residues 72–100 (EAQE…QSLL) and 113–171 (NLKN…PRLG). Polar residues-rich tracts occupy residues 86-100 (AATQ…QSLL) and 114-137 (LKNT…SLST). Ser-179 and Ser-181 each carry phosphoserine. The segment at 235 to 340 (SEVSVQSPEA…LHASPRPASL (106 aa)) is disordered. 2 stretches are compositionally biased toward polar residues: residues 248–262 (QPAQ…SINS) and 306–320 (TQVN…SNQA). The CCHC-type zinc-finger motif lies at 393 to 410 (DTCFRCGQFGHWASQCSQ). Residues 436–458 (AQRTGTASCHHSGEETQPAAPEL) are disordered. The region spanning 506–684 (IMRILSGIST…AQHLGIAGEF (179 aa)) is the Helicase ATP-binding domain. Residue 519–526 (LPTGAGKS) coordinates ATP. Positions 627–630 (DEVH) match the DEAH box motif. In terms of domain architecture, Helicase C-terminal spans 705–872 (DSDQALVTLL…AVKRLVQRVF (168 aa)). The Zn(2+) site is built by Cys-875, Cys-877, Cys-906, and His-909.

Belongs to the helicase family. RecQ subfamily. As to quaternary structure, interacts with UBR1 and UBR2. Interacts with MCM10; this interaction regulates RECQL4 unwinding activity. Interacts with TOPBP1. Requires Zn(2+) as cofactor.

It localises to the cytoplasm. The protein resides in the nucleus. It carries out the reaction Couples ATP hydrolysis with the unwinding of duplex DNA by translocating in the 3'-5' direction.. It catalyses the reaction ATP + H2O = ADP + phosphate + H(+). An ATP-dependent DNA helicase which unwinds dsDNA with a 3'-overhang in a 3'-5' direction. May play a role in development of the palate and the limbs. May modulate chromosome segregation. This chain is ATP-dependent DNA helicase Q4 (Recql4), found in Mus musculus (Mouse).